A 207-amino-acid chain; its full sequence is Small ribosomal subunit protein uS4 (207 aa).

A disordered region spans residues 31 to 54; it reads KSKFETKPGQHGRTSGSRTSDFGL. Residues 42 to 52 show a composition bias toward polar residues; it reads GRTSGSRTSDF. Positions 97–158 constitute an S4 RNA-binding domain; sequence SRLDNVVYRM…KAKKQLRVTE (62 aa).

This sequence belongs to the universal ribosomal protein uS4 family. As to quaternary structure, part of the 30S ribosomal subunit. Contacts protein S5. The interaction surface between S4 and S5 is involved in control of translational fidelity.

In terms of biological role, one of the primary rRNA binding proteins, it binds directly to 16S rRNA where it nucleates assembly of the body of the 30S subunit. Its function is as follows. With S5 and S12 plays an important role in translational accuracy. The chain is Small ribosomal subunit protein uS4 from Methylibium petroleiphilum (strain ATCC BAA-1232 / LMG 22953 / PM1).